A 508-amino-acid polypeptide reads, in one-letter code: Alpha-amylase (508 aa).

The N-terminal stretch at 1–19 is a signal peptide; the sequence is MLSLIIAACCVTVALAGTF. A disulfide bridge links C46 with C102. N116, R173, and D182 together coordinate Ca(2+). Residues C156 and C175 are joined by a disulfide bond. R210 is a chloride binding site. Residue D212 is the Nucleophile of the active site. H216 contributes to the Ca(2+) binding site. E248 functions as the Proton donor in the catalytic mechanism. The chloride site is built by N311 and R349. Intrachain disulfides connect C383–C389 and C455–C467.

Belongs to the glycosyl hydrolase 13 family. As to quaternary structure, monomer. The cofactor is Ca(2+). It depends on chloride as a cofactor.

The catalysed reaction is Endohydrolysis of (1-&gt;4)-alpha-D-glucosidic linkages in polysaccharides containing three or more (1-&gt;4)-alpha-linked D-glucose units.. This Pecten maximus (King scallop) protein is Alpha-amylase.